Consider the following 232-residue polypeptide: Proteasome subunit alpha (232 aa).

Belongs to the peptidase T1A family. In terms of assembly, the 20S proteasome core is composed of 14 alpha and 14 beta subunits that assemble into four stacked heptameric rings, resulting in a barrel-shaped structure. The two inner rings, each composed of seven catalytic beta subunits, are sandwiched by two outer rings, each composed of seven alpha subunits. The catalytic chamber with the active sites is on the inside of the barrel. Has a gated structure, the ends of the cylinder being occluded by the N-termini of the alpha-subunits. Is capped by the proteasome-associated ATPase, ARC.

It localises to the cytoplasm. It functions in the pathway protein degradation; proteasomal Pup-dependent pathway. The formation of the proteasomal ATPase ARC-20S proteasome complex, likely via the docking of the C-termini of ARC into the intersubunit pockets in the alpha-rings, may trigger opening of the gate for substrate entry. Interconversion between the open-gate and close-gate conformations leads to a dynamic regulation of the 20S proteasome proteolysis activity. Its function is as follows. Component of the proteasome core, a large protease complex with broad specificity involved in protein degradation. This is Proteasome subunit alpha from Acidimicrobium ferrooxidans (strain DSM 10331 / JCM 15462 / NBRC 103882 / ICP).